The chain runs to 318 residues: Olfactory receptor 2T3 (318 aa).

Residues 1-30 (MCSGNQTSQNQTASTDFTLTGLFAESKHAA) are Extracellular-facing. N-linked (GlcNAc...) asparagine glycosylation is found at N5 and N10. The helical transmembrane segment at 31–54 (LLYTVTFLLFLMALTGNALLILLI) threads the bilayer. At 55-62 (HSEPRLHT) the chain is on the cytoplasmic side. A helical membrane pass occupies residues 63–84 (PMYFFISQLALMDLMYLCVTVP). Over 85–105 (KMLVGQVTGDDTISPSGCGIQ) the chain is Extracellular. A disulfide bond links C102 and C194. The helical transmembrane segment at 106–125 (MFFYLTLAGAEVFLLAAMAY) threads the bilayer. Over 126–144 (DRYAAVCRPLHYPLLMNQR) the chain is Cytoplasmic. Residues 145 to 163 (VCQLLVSACWVLGMVDGLL) traverse the membrane as a helical segment. Over 164–200 (LTPITMSFPFCQSRKILSFFCETPALLKLSCSDVSLY) the chain is Extracellular. The chain crosses the membrane as a helical span at residues 201–224 (KTLMYLCCILMLLAPIMVISSSYT). Residues 225–241 (LILHLIHRMNSAAGHRK) are Cytoplasmic-facing. A helical membrane pass occupies residues 242-264 (ALATCSSHMIIVLLLFGASFYTY). Residues 265–277 (MLPSSYHTAEQDM) lie on the Extracellular side of the membrane. Residues 278-297 (MVSAFYTIFTPVLNPLIYSL) form a helical membrane-spanning segment. Residues 298–318 (RNKDVTRALRSMMQSRMNQEK) lie on the Cytoplasmic side of the membrane.

It belongs to the G-protein coupled receptor 1 family.

The protein localises to the cell membrane. Odorant receptor. This is Olfactory receptor 2T3 (OR2T3) from Homo sapiens (Human).